We begin with the raw amino-acid sequence, 463 residues long: Argininosuccinate lyase (463 aa).

It belongs to the lyase 1 family. Argininosuccinate lyase subfamily.

It is found in the cytoplasm. It catalyses the reaction 2-(N(omega)-L-arginino)succinate = fumarate + L-arginine. It participates in amino-acid biosynthesis; L-arginine biosynthesis; L-arginine from L-ornithine and carbamoyl phosphate: step 3/3. The protein is Argininosuccinate lyase of Prochlorococcus marinus (strain NATL1A).